A 440-amino-acid polypeptide reads, in one-letter code: Chitinase-like protein Idgf5 (440 aa).

An N-terminal signal peptide occupies residues 1-27; the sequence is MRNKMIYFNFHLFVIIFANLQIFQVQA. The region spanning 28–439 is the GH18 domain; sequence ANIFCYYDTQ…KSIHNAFKKF (412 aa). An intrachain disulfide couples Cys32 to Cys56. Asn126, Asn283, and Asn403 each carry an N-linked (GlcNAc...) asparagine glycan. Cys340 and Cys421 are oxidised to a cystine.

It belongs to the glycosyl hydrolase 18 family. IDGF subfamily. Post-translationally, glycosylated.

It is found in the secreted. Its function is as follows. Cooperates with insulin-like peptides to stimulate the proliferation, polarization and motility of imaginal disk cells. May act by stabilizing the binding of insulin-like peptides to its receptor through a simultaneous interaction with both molecules to form a multiprotein signaling complex. The protein is Chitinase-like protein Idgf5 (Idgf5) of Glossina morsitans morsitans (Savannah tsetse fly).